Consider the following 776-residue polypeptide: Bifunctional lysine-specific demethylase and histidyl-hydroxylase NO66 (776 aa).

3 disordered regions span residues 1–57, 87–126, and 165–288; these read MGKK…EPKF, EQNGGKKRRHREISPKMEAKKPKVESKSKDGVAAKKAHKH, and ILDE…DDEG. Composition is skewed to basic and acidic residues over residues 47-57 and 98-119; these read HYKEPSKEPKF and EISPKMEAKKPKVESKSKDGVA. A compositionally biased stretch (acidic residues) spans 166–204; it reads LDEEVEDEEIDEEEFEDEEEVEDEEGMDEDETEIDESEM. Positions 206 to 216 are enriched in basic and acidic residues; that stretch reads VDPKDIERCIE. The segment covering 217 to 288 has biased composition (acidic residues); sequence FEDVDDEDEM…EMDADSDDEG (72 aa). The 145-residue stretch at 425–569 folds into the JmjC domain; that stretch reads QLVNPQTFDD…NLMEKVIPEA (145 aa). Residues His468, Asp470, and His535 each contribute to the Fe cation site.

The protein belongs to the ROX family. NO66 subfamily. Fe(2+) is required as a cofactor.

The protein resides in the nucleus. It catalyses the reaction N(6),N(6)-dimethyl-L-lysyl(36)-[histone H3] + 2 2-oxoglutarate + 2 O2 = L-lysyl(36)-[histone H3] + 2 formaldehyde + 2 succinate + 2 CO2. In terms of biological role, oxygenase that can act as both a histone lysine demethylase and a ribosomal histidine hydroxylase. Specifically demethylates 'Lys-4' (H3K4me) and 'Lys-36' (H3K36me) of histone H3, thereby playing a central role in histone code. The protein is Bifunctional lysine-specific demethylase and histidyl-hydroxylase NO66 (jmjc-1) of Caenorhabditis briggsae.